Here is a 99-residue protein sequence, read N- to C-terminus: Small ribosomal subunit protein bS18 (99 aa).

This sequence belongs to the bacterial ribosomal protein bS18 family. As to quaternary structure, part of the 30S ribosomal subunit. Forms a tight heterodimer with protein bS6.

Functionally, binds as a heterodimer with protein bS6 to the central domain of the 16S rRNA, where it helps stabilize the platform of the 30S subunit. The polypeptide is Small ribosomal subunit protein bS18 (Christiangramia forsetii (strain DSM 17595 / CGMCC 1.15422 / KT0803) (Gramella forsetii)).